The following is a 420-amino-acid chain: MDKLVIKKGSALNGTVRISGAKNAALPLLMTSLLTDSPCRYTNVPRLRDINTTTALLRELGVEVALPAPNDIVIDASTLESVTASYDLVRTMRASILVLGPLLAKQGKANVSLPGGCAIGARPVNLHLTGLEKMGAKIEVDEGYIRAKVDGRLKGARIFMDMVSVGATENLLMAAALADGTTILENAAREPEIVDLANCLIQMGAKISGAGSDKITIEGVETLNGCDYAVLPDRIETGTFLVAAAVTGGKVRCTNAAPDTLDAVLDKLEQAGAKITTGEDWIELDMEGRKPQAVRVKTAPHPAFPTDMQAQFVTLNCVAEGTGVITETIFENRFMHVPELQRMGAEIALEANSAVSKGSSSLKGAPVMATDLRASASLVIAGLIAEGETHVNRIYHLDRGYEAIEEKLGGLGAIIERVKE.

A phosphoenolpyruvate-binding site is contributed by 22–23; that stretch reads KN. Arginine 93 is a UDP-N-acetyl-alpha-D-glucosamine binding site. The Proton donor role is filled by cysteine 117. A 2-(S-cysteinyl)pyruvic acid O-phosphothioketal modification is found at cysteine 117. Residues aspartate 307 and isoleucine 329 each contribute to the UDP-N-acetyl-alpha-D-glucosamine site.

Belongs to the EPSP synthase family. MurA subfamily.

The protein localises to the cytoplasm. The enzyme catalyses phosphoenolpyruvate + UDP-N-acetyl-alpha-D-glucosamine = UDP-N-acetyl-3-O-(1-carboxyvinyl)-alpha-D-glucosamine + phosphate. The protein operates within cell wall biogenesis; peptidoglycan biosynthesis. In terms of biological role, cell wall formation. Adds enolpyruvyl to UDP-N-acetylglucosamine. The sequence is that of UDP-N-acetylglucosamine 1-carboxyvinyltransferase from Alteromonas mediterranea (strain DSM 17117 / CIP 110805 / LMG 28347 / Deep ecotype).